The chain runs to 108 residues: MFSRVFAVASLAALALAGPLSVRDQCNTGTIQCCQQVQQASYYQSAFQEIGLGELLAGVTGQIGTQCSPISVVGASNGAQCNAQTVCCTNTQFNGLINIGCMPINVNA.

The first 17 residues, 1 to 17 (MFSRVFAVASLAALALA), serve as a signal peptide directing secretion. Cystine bridges form between cysteine 26/cysteine 87, cysteine 33/cysteine 81, cysteine 34/cysteine 67, and cysteine 88/cysteine 101.

Belongs to the fungal hydrophobin family. In terms of assembly, self-assembles to form functional amyloid fibrils called rodlets. Self-assembly into fibrillar rodlets occurs spontaneously at hydrophobic:hydrophilic interfaces and the rodlets further associate laterally to form amphipathic monolayers.

It is found in the secreted. It localises to the cell wall. Its function is as follows. Aerial growth, conidiation, and dispersal of filamentous fungi in the environment rely upon a capability of their secreting small amphipathic proteins called hydrophobins (HPBs) with low sequence identity. Class I can self-assemble into an outermost layer of rodlet bundles on aerial cell surfaces, conferring cellular hydrophobicity that supports fungal growth, development and dispersal; whereas Class II form highly ordered films at water-air interfaces through intermolecular interactions but contribute nothing to the rodlet structure. The sequence is that of Class I hydrophobin 3 from Pisolithus tinctorius (Dead man's foot).